A 1298-amino-acid polypeptide reads, in one-letter code: Phosphoribosylformylglycinamidine synthase (1298 aa).

Positions 303–327 (FPGAATGSGGEIRDEGATGRGAKPK) are disordered. Residues 305 to 316 (GAATGSGGEIRD), 384 to 386 (TGY), and A676 contribute to the ATP site. Positions 677, 716, 720, and 884 each coordinate Mg(2+). Residue S886 coordinates ATP. The region spanning 1045-1298 (VAVLREQGVN…MFRNARAWVN (254 aa)) is the Glutamine amidotransferase type-1 domain. C1138 (nucleophile) is an active-site residue. Catalysis depends on residues H1263 and E1265.

It in the N-terminal section; belongs to the FGAMS family. In terms of assembly, monomer.

It localises to the cytoplasm. The catalysed reaction is N(2)-formyl-N(1)-(5-phospho-beta-D-ribosyl)glycinamide + L-glutamine + ATP + H2O = 2-formamido-N(1)-(5-O-phospho-beta-D-ribosyl)acetamidine + L-glutamate + ADP + phosphate + H(+). The protein operates within purine metabolism; IMP biosynthesis via de novo pathway; 5-amino-1-(5-phospho-D-ribosyl)imidazole from N(2)-formyl-N(1)-(5-phospho-D-ribosyl)glycinamide: step 1/2. Functionally, phosphoribosylformylglycinamidine synthase involved in the purines biosynthetic pathway. Catalyzes the ATP-dependent conversion of formylglycinamide ribonucleotide (FGAR) and glutamine to yield formylglycinamidine ribonucleotide (FGAM) and glutamate. In Pseudomonas savastanoi pv. phaseolicola (strain 1448A / Race 6) (Pseudomonas syringae pv. phaseolicola (strain 1448A / Race 6)), this protein is Phosphoribosylformylglycinamidine synthase.